The sequence spans 258 residues: Tropinone reductase-like 3 (258 aa).

19-43 contacts NAD(+); sequence IVTASTQGIGFAIAYRLGLEGAAVV. Serine 150 contributes to the substrate binding site. Tyrosine 163 functions as the Proton acceptor in the catalytic mechanism.

This sequence belongs to the short-chain dehydrogenases/reductases (SDR) family.

In terms of biological role, has no tropinone reductase activity. The polypeptide is Tropinone reductase-like 3 (Erythroxylum coca (Coca plant)).